We begin with the raw amino-acid sequence, 158 residues long: MTVSSQSPVKKQLHNAIQPSNGQYEYHDKLSTLGMRIRQAVDNGYQGVSVHNTANNTIAATSGSNGSNSSINGAGFSNICVQDNTRFTIPEYKRVALAKQPPMLVNQRTVSMNSNLEQWEQNLDQRLSSIDDDIMRNKLGASDFLSGASKRSFDDLEF.

This sequence belongs to the DIF1/spd1 family.

Its subcellular location is the cytoplasm. It is found in the nucleus. In terms of biological role, mediates the nuclear localization of the ribonucleotide reductase. The sequence is that of Damage-regulated import facilitator 1 (DIF1) from Kluyveromyces lactis (strain ATCC 8585 / CBS 2359 / DSM 70799 / NBRC 1267 / NRRL Y-1140 / WM37) (Yeast).